The sequence spans 214 residues: Orotate phosphoribosyltransferase (214 aa).

Lys26 contributes to the 5-phospho-alpha-D-ribose 1-diphosphate binding site. An orotate-binding site is contributed by 34–35 (FF). 5-phospho-alpha-D-ribose 1-diphosphate-binding positions include 72 to 73 (YK), Arg99, Lys100, Lys103, His105, and 124 to 132 (DDVITAGTA). Orotate is bound by residues Thr128 and Arg156.

This sequence belongs to the purine/pyrimidine phosphoribosyltransferase family. PyrE subfamily. In terms of assembly, homodimer. The cofactor is Mg(2+).

It carries out the reaction orotidine 5'-phosphate + diphosphate = orotate + 5-phospho-alpha-D-ribose 1-diphosphate. It functions in the pathway pyrimidine metabolism; UMP biosynthesis via de novo pathway; UMP from orotate: step 1/2. In terms of biological role, catalyzes the transfer of a ribosyl phosphate group from 5-phosphoribose 1-diphosphate to orotate, leading to the formation of orotidine monophosphate (OMP). This chain is Orotate phosphoribosyltransferase, found in Proteus mirabilis (strain HI4320).